The primary structure comprises 500 residues: Lysine--tRNA ligase (500 aa).

2 residues coordinate Mg(2+): Glu-410 and Glu-417.

The protein belongs to the class-II aminoacyl-tRNA synthetase family. As to quaternary structure, homodimer. Mg(2+) is required as a cofactor.

The protein resides in the cytoplasm. It carries out the reaction tRNA(Lys) + L-lysine + ATP = L-lysyl-tRNA(Lys) + AMP + diphosphate. This is Lysine--tRNA ligase from Pseudomonas savastanoi pv. phaseolicola (strain 1448A / Race 6) (Pseudomonas syringae pv. phaseolicola (strain 1448A / Race 6)).